Consider the following 113-residue polypeptide: U11-theraphotoxin-Hhn1a (113 aa).

The signal sequence occupies residues 1-21 (MNTVRVTFLLVFVLAVSLGQA). The propeptide occupies 22–74 (DKDENRMEMQEKTEQGESYLDFAENLLLQKLEELEAKLLEEDSEESRNSRQKR). 3 cysteine pairs are disulfide-bonded: Cys-75–Cys-90, Cys-82–Cys-95, and Cys-89–Cys-110.

The protein belongs to the neurotoxin 14 (magi-1) family. 01 (HNTX-16) subfamily. Expressed by the venom gland.

Its subcellular location is the secreted. Probable ion channel inhibitor. The protein is U11-theraphotoxin-Hhn1a of Cyriopagopus hainanus (Chinese bird spider).